Reading from the N-terminus, the 158-residue chain is 2-C-methyl-D-erythritol 2,4-cyclodiphosphate synthase (158 aa).

A divalent metal cation contacts are provided by Asp-9 and His-11. 4-CDP-2-C-methyl-D-erythritol 2-phosphate is bound by residues 9-11 and 35-36; these read DVH and HS. Residue His-43 participates in a divalent metal cation binding. Residues 57–59, 62–66, 133–136, Phe-140, and Arg-143 contribute to the 4-CDP-2-C-methyl-D-erythritol 2-phosphate site; these read DIG, FPDTD, and TTTE.

Belongs to the IspF family. In terms of assembly, homotrimer. The cofactor is a divalent metal cation.

The enzyme catalyses 4-CDP-2-C-methyl-D-erythritol 2-phosphate = 2-C-methyl-D-erythritol 2,4-cyclic diphosphate + CMP. The protein operates within isoprenoid biosynthesis; isopentenyl diphosphate biosynthesis via DXP pathway; isopentenyl diphosphate from 1-deoxy-D-xylulose 5-phosphate: step 4/6. Functionally, involved in the biosynthesis of isopentenyl diphosphate (IPP) and dimethylallyl diphosphate (DMAPP), two major building blocks of isoprenoid compounds. Catalyzes the conversion of 4-diphosphocytidyl-2-C-methyl-D-erythritol 2-phosphate (CDP-ME2P) to 2-C-methyl-D-erythritol 2,4-cyclodiphosphate (ME-CPP) with a corresponding release of cytidine 5-monophosphate (CMP). The sequence is that of 2-C-methyl-D-erythritol 2,4-cyclodiphosphate synthase from Haemophilus influenzae (strain PittGG).